Consider the following 176-residue polypeptide: uncharacterized protein (176 aa).

Residues 1–12 are compositionally biased toward polar residues; sequence MRLPYSSSKPIP. Disordered stretches follow at residues 1–88 and 109–132; these read MRLP…PQQQ and VNNS…PSSS. The segment covering 13 to 24 has biased composition (low complexity); that stretch reads TNNNNNNNNTNN. Residues 37 to 46 show a composition bias toward polar residues; it reads SYYQTQENNK. Positions 47–88 are enriched in low complexity; it reads PQQSQQHPLLQHQQQQQQQQQQQQQQQQQQQQQQQQQQPQQQ.

This is an uncharacterized protein from Dictyostelium discoideum (Social amoeba).